The primary structure comprises 217 residues: 3,4-dihydroxy-2-butanone 4-phosphate synthase (217 aa).

D-ribulose 5-phosphate contacts are provided by residues 37–38, Asp42, 150–154, and Glu174; these read RE and RGGHT. Mg(2+) is bound at residue Glu38. Residue His153 coordinates Mg(2+).

This sequence belongs to the DHBP synthase family. As to quaternary structure, homodimer. It depends on Mg(2+) as a cofactor. Mn(2+) serves as cofactor.

The enzyme catalyses D-ribulose 5-phosphate = (2S)-2-hydroxy-3-oxobutyl phosphate + formate + H(+). Its pathway is cofactor biosynthesis; riboflavin biosynthesis; 2-hydroxy-3-oxobutyl phosphate from D-ribulose 5-phosphate: step 1/1. Its function is as follows. Catalyzes the conversion of D-ribulose 5-phosphate to formate and 3,4-dihydroxy-2-butanone 4-phosphate. This is 3,4-dihydroxy-2-butanone 4-phosphate synthase from Sodalis glossinidius (strain morsitans).